The sequence spans 97 residues: Large ribosomal subunit protein uL23 (97 aa).

This sequence belongs to the universal ribosomal protein uL23 family. In terms of assembly, part of the 50S ribosomal subunit. Contacts protein L29, and trigger factor when it is bound to the ribosome.

In terms of biological role, one of the early assembly proteins it binds 23S rRNA. One of the proteins that surrounds the polypeptide exit tunnel on the outside of the ribosome. Forms the main docking site for trigger factor binding to the ribosome. This Limosilactobacillus fermentum (strain NBRC 3956 / LMG 18251) (Lactobacillus fermentum) protein is Large ribosomal subunit protein uL23.